Here is a 228-residue protein sequence, read N- to C-terminus: Ribonuclease HII (228 aa).

Residues 26 to 214 (RAVAGVDEVG…VRAHSRFPLD (189 aa)) enclose the RNase H type-2 domain. Residues Asp32, Glu33, and Asp124 each contribute to the a divalent metal cation site.

This sequence belongs to the RNase HII family. Mn(2+) is required as a cofactor. It depends on Mg(2+) as a cofactor.

The protein localises to the cytoplasm. The catalysed reaction is Endonucleolytic cleavage to 5'-phosphomonoester.. Endonuclease that specifically degrades the RNA of RNA-DNA hybrids. This chain is Ribonuclease HII, found in Solibacter usitatus (strain Ellin6076).